Reading from the N-terminus, the 759-residue chain is Cullin-4A (759 aa).

The tract at residues 1–40 is disordered; it reads MADEGPRKGSVSALMGRTNGLTKPAALAGGPAKPGGTGGS. Lys-8 is covalently cross-linked (Glycyl lysine isopeptide (Lys-Gly) (interchain with G-Cter in SUMO2)). Ser-10 carries the phosphoserine modification. Residues 20–31 show a composition bias toward low complexity; sequence GLTKPAALAGGP. Residue Lys-33 forms a Glycyl lysine isopeptide (Lys-Gly) (interchain with G-Cter in ubiquitin) linkage. Residues 691–750 enclose the Cullin neddylation domain; sequence DRQYQIDAAIVRIMKMRKTLGHNLLVSELYNQLKFPVKPGDLKKRIESLIDRDYMERDKD. Lys-705 participates in a covalent cross-link: Glycyl lysine isopeptide (Lys-Gly) (interchain with G-Cter in NEDD8).

The protein belongs to the cullin family. Can self-associate. Component of multiple DCX (DDB1-CUL4-X-box) E3 ubiquitin-protein ligase complexes that seem to consist of DDB1, CUL4A or CUL4B, RBX1 and a variable substrate recognition component which seems to belong to a protein family described as DCAF (Ddb1- and Cul4-associated factor) or CDW (CUL4-DDB1-associated WD40-repeat) proteins. Component of the CSA complex (DCX(ERCC8) complex) containing ERCC8, RBX1, DDB1 and CUL4A; the CSA complex interacts with RNA polymerase II; upon UV irradiation it interacts with the COP9 signalosome and preferentially with the hyperphosphorylated form of RNA polymerase II. Component of the DCX(DET1-COP1) complex with the substrate recognition component DET1 and COP1. Component of the DCX(DDB2) complex with the substrate recognition component DDB2. Component of the DCX(DTL) complex with the putative substrate recognition component DTL. Component of DCX complexes part of the DesCEND (destruction via C-end degrons) pathway, which contain either TRPC4AP or DCAF12 as substrate-recognition component. Component of the DCX(AMBRA1) complex with the substrate recognition component AMBRA1. Interacts with DDB1, RBX1, RNF7, CDT1, TIP120A/CAND1, SKP2, CDKN1B, MDM2, TP53 and HOXA9. Interacts with DDB2; the interactions with DDB2 and CAND1 are mutually exclusive. Interacts with DCAF1, DTL, DDA1, DCAF6, DCAF4, DCAF16, DCAF17, DET1, WDTC1, DCAF5, DCAF11, WDR24A, COP1, PAFAH1B1, ERCC8, GRWD1, FBXW5, RBBP7, GNB2, WSB1, WSB2, NUP43, PWP1, FBXW8, ATG16L1, KATNB1, RBBP4, RBBP5, LRWD1 and DCAF8. May interact with WDR26, WDR51B, SNRNP40, WDR61, WDR76, WDR5. Interacts (when neddylated) with ARIH1; leading to activate the E3 ligase activity of ARIH1. The DDB1-CUL4A complex interacts with CRY1. Interacts (unneddylated form) with DCUN1D1, DCUN1D2, DCUN1D3, DCUN1D4 and DCUN1D5; these interactions promote the cullin neddylation. In terms of assembly, (Microbial infection) Interacts with murine cytomegalovirus M48. Neddylated; required for activity of cullin-RING-based E3 ubiquitin-protein ligase complexes. Deneddylated via its interaction with the COP9 signalosome (CSN) complex. Post-translationally, (Microbial infection) Deneddylated by murine cytomegalovirus M48 leading to a S-phase-like environment that is required for efficient replication of the viral genome. In terms of tissue distribution, expressed in oocytes (at protein level). In the ovary, also expressed in cumulus cells. Expressed in testis, spleen and kidney.

It participates in protein modification; protein ubiquitination. In terms of biological role, core component of multiple cullin-RING-based E3 ubiquitin-protein ligase complexes which mediate the ubiquitination of target proteins. As a scaffold protein may contribute to catalysis through positioning of the substrate and the ubiquitin-conjugating enzyme. The E3 ubiquitin-protein ligase activity of the complex is dependent on the neddylation of the cullin subunit and is inhibited by the association of the deneddylated cullin subunit with TIP120A/CAND1. The functional specificity of the E3 ubiquitin-protein ligase complex depends on the variable substrate recognition component. DCX(DET1-COP1) directs ubiquitination of JUN. DCX(DDB2) directs ubiquitination of XPC. DCX(DDB2) ubiquitinates histones H3-H4 and is required for efficient histone deposition during replication-coupled (H3.1) and replication-independent (H3.3) nucleosome assembly, probably by facilitating the transfer of H3 from ASF1A/ASF1B to other chaperones involved in histone deposition. DCX(DTL) plays a role in PCNA-dependent polyubiquitination of CDT1 and MDM2-dependent ubiquitination of p53/TP53 in response to radiation-induced DNA damage and during DNA replication. DCX(DTL) directs autoubiquitination of DTL. In association with DDB1 and SKP2 probably is involved in ubiquitination of CDKN1B/p27kip. Is involved in ubiquitination of HOXA9. The DDB1-CUL4A-DTL E3 ligase complex regulates the circadian clock function by mediating the ubiquitination and degradation of CRY1. The DCX(ERCC8) complex (also named CSA complex) plays a role in transcription-coupled repair (TCR). A number of DCX complexes (containing either TRPC4AP or DCAF12 as substrate-recognition component) are part of the DesCEND (destruction via C-end degrons) pathway, which recognizes a C-degron located at the extreme C terminus of target proteins, leading to their ubiquitination and degradation. With CUL4B, contributes to ribosome biogenesis. The DCX(AMBRA1) complex is a master regulator of the transition from G1 to S cell phase by mediating ubiquitination of phosphorylated cyclin-D (CCND1, CCND2 and CCND3). The DCX(AMBRA1) complex also acts as a regulator of Cul5-RING (CRL5) E3 ubiquitin-protein ligase complexes by mediating ubiquitination and degradation of Elongin-C (ELOC) component of CRL5 complexes. In Mus musculus (Mouse), this protein is Cullin-4A.